Here is a 368-residue protein sequence, read N- to C-terminus: tRNA-specific 2-thiouridylase MnmA (368 aa).

ATP contacts are provided by residues 12-19 (GMSGGVDS) and M38. The interval 98 to 100 (NPD) is interaction with target base in tRNA. C103 acts as the Nucleophile in catalysis. C103 and C200 form a disulfide bridge. Residue G128 participates in ATP binding. The interval 150–152 (KDQ) is interaction with tRNA. C200 serves as the catalytic Cysteine persulfide intermediate. Positions 313–314 (RY) are interaction with tRNA.

This sequence belongs to the MnmA/TRMU family. Interacts with TusE.

It is found in the cytoplasm. It carries out the reaction S-sulfanyl-L-cysteinyl-[protein] + uridine(34) in tRNA + AH2 + ATP = 2-thiouridine(34) in tRNA + L-cysteinyl-[protein] + A + AMP + diphosphate + H(+). In terms of biological role, catalyzes the 2-thiolation of uridine at the wobble position (U34) of tRNA(Lys), tRNA(Glu) and tRNA(Gln), leading to the formation of s(2)U34, the first step of tRNA-mnm(5)s(2)U34 synthesis. Sulfur is provided by IscS, via a sulfur-relay system. Binds ATP and its substrate tRNAs. In Pectobacterium atrosepticum (strain SCRI 1043 / ATCC BAA-672) (Erwinia carotovora subsp. atroseptica), this protein is tRNA-specific 2-thiouridylase MnmA.